A 478-amino-acid chain; its full sequence is Catalase easC (478 aa).

His54 is an active-site residue. Tyr343 lines the heme pocket. The disordered stretch occupies residues 459–478 (VAEKARPDSPSRAQPGQLRL).

Belongs to the catalase family. The cofactor is heme.

It participates in alkaloid biosynthesis; ergot alkaloid biosynthesis. Functionally, catalase; part of the gene cluster that mediates the biosynthesis of fungal ergot alkaloid. DmaW catalyzes the first step of ergot alkaloid biosynthesis by condensing dimethylallyl diphosphate (DMAP) and tryptophan to form 4-dimethylallyl-L-tryptophan. The second step is catalyzed by the methyltransferase easF that methylates 4-dimethylallyl-L-tryptophan in the presence of S-adenosyl-L-methionine, resulting in the formation of 4-dimethylallyl-L-abrine. The catalase easC and the FAD-dependent oxidoreductase easE then transform 4-dimethylallyl-L-abrine to chanoclavine-I which is further oxidized by easD in the presence of NAD(+), resulting in the formation of chanoclavine-I aldehyde. Chanoclavine-I aldehyde is the precursor of ergoamides and ergopeptines in Clavicipitaceae, and clavine-type alcaloids such as fumiclavine in Trichocomaceae. However, the metabolites downstream of chanoclavine-I aldehyde in Arthrodermataceae have not been identified yet. This is Catalase easC from Arthroderma benhamiae (strain ATCC MYA-4681 / CBS 112371) (Trichophyton mentagrophytes).